A 324-amino-acid chain; its full sequence is NADH-ubiquinone oxidoreductase chain 1 (324 aa).

Transmembrane regions (helical) follow at residues 9–29 (LINP…LTLI), 75–95 (FLFL…WAPM), 106–126 (LGIL…LGSG), 146–166 (ISYE…SGGY), 177–197 (SIWL…STLA), 228–248 (LFFL…AVLF), 259–279 (ELTT…FLWV), and 299–319 (FLPL…ALAG).

It belongs to the complex I subunit 1 family.

The protein localises to the mitochondrion inner membrane. It catalyses the reaction a ubiquinone + NADH + 5 H(+)(in) = a ubiquinol + NAD(+) + 4 H(+)(out). Its function is as follows. Core subunit of the mitochondrial membrane respiratory chain NADH dehydrogenase (Complex I) that is believed to belong to the minimal assembly required for catalysis. Complex I functions in the transfer of electrons from NADH to the respiratory chain. The immediate electron acceptor for the enzyme is believed to be ubiquinone. This Carassius auratus (Goldfish) protein is NADH-ubiquinone oxidoreductase chain 1 (MT-ND1).